The following is a 226-amino-acid chain: Phosphoribosylformylglycinamidine synthase subunit PurQ (226 aa).

The Glutamine amidotransferase type-1 domain occupies 3–225 (FAVIVFPGSN…VKWGARHVTY (223 aa)). Cys-86 acts as the Nucleophile in catalysis. Residues His-194 and Glu-196 contribute to the active site.

Part of the FGAM synthase complex composed of 1 PurL, 1 PurQ and 2 PurS subunits.

It is found in the cytoplasm. It catalyses the reaction N(2)-formyl-N(1)-(5-phospho-beta-D-ribosyl)glycinamide + L-glutamine + ATP + H2O = 2-formamido-N(1)-(5-O-phospho-beta-D-ribosyl)acetamidine + L-glutamate + ADP + phosphate + H(+). The catalysed reaction is L-glutamine + H2O = L-glutamate + NH4(+). It functions in the pathway purine metabolism; IMP biosynthesis via de novo pathway; 5-amino-1-(5-phospho-D-ribosyl)imidazole from N(2)-formyl-N(1)-(5-phospho-D-ribosyl)glycinamide: step 1/2. Its function is as follows. Part of the phosphoribosylformylglycinamidine synthase complex involved in the purines biosynthetic pathway. Catalyzes the ATP-dependent conversion of formylglycinamide ribonucleotide (FGAR) and glutamine to yield formylglycinamidine ribonucleotide (FGAM) and glutamate. The FGAM synthase complex is composed of three subunits. PurQ produces an ammonia molecule by converting glutamine to glutamate. PurL transfers the ammonia molecule to FGAR to form FGAM in an ATP-dependent manner. PurS interacts with PurQ and PurL and is thought to assist in the transfer of the ammonia molecule from PurQ to PurL. The sequence is that of Phosphoribosylformylglycinamidine synthase subunit PurQ from Exiguobacterium sp. (strain ATCC BAA-1283 / AT1b).